Reading from the N-terminus, the 280-residue chain is Probable holocytochrome-c-type synthase (280 aa).

Residues 1 to 95 are disordered; sequence MGSSQSTPKV…FALPTKREKS (95 aa). 2 HRM repeats span residues 35–40 and 56–61; these read QCPLTP and ACPVGA.

It belongs to the cytochrome c-type heme lyase family.

Its subcellular location is the mitochondrion inner membrane. It carries out the reaction holo-[cytochrome c] = apo-[cytochrome c] + heme b. In terms of biological role, probable lyase that catalyzes the covalent linking of the heme group to the cytochrome C apoprotein to produce the mature functional cytochrome. This chain is Probable holocytochrome-c-type synthase (cchl-1), found in Caenorhabditis elegans.